The following is a 252-amino-acid chain: Oncostatin-M (252 aa).

A signal peptide spans 1-25; that stretch reads MGVLLTQRTLLSLVLALLFPSMASM. 2 cysteine pairs are disulfide-bonded: Cys31–Cys152 and Cys74–Cys192. Asn100 is a glycosylation site (N-linked (GlcNAc...) asparagine). 2 disordered regions span residues 162–184 and 213–252; these read TAEP…ASDA and GESP…QLPR. The N-linked (GlcNAc...) asparagine glycan is linked to Asn217. A compositionally biased stretch (basic residues) spans 218–245; that stretch reads RSRRHSPHQALRKGVRRTRPSRKGKRLM. The propeptide occupies 222–252; sequence HSPHQALRKGVRRTRPSRKGKRLMTRGQLPR.

It belongs to the LIF/OSM family. Post-translationally, propeptide processing is not important for receptor binding activity but may be important growth-inhibitory activity.

It localises to the secreted. In terms of biological role, growth regulator. Inhibits the proliferation of a number of tumor cell lines. Stimulates proliferation of AIDS-KS cells. It regulates cytokine production, including IL-6, G-CSF and GM-CSF from endothelial cells. Uses both type I OSM receptor (heterodimers composed of LIFR and IL6ST) and type II OSM receptor (heterodimers composed of OSMR and IL6ST). Involved in the maturation of fetal hepatocytes, thereby promoting liver development and regeneration. This Homo sapiens (Human) protein is Oncostatin-M (OSM).